We begin with the raw amino-acid sequence, 557 residues long: Potassium-transporting ATPase potassium-binding subunit (557 aa).

12 consecutive transmembrane segments (helical) span residues 5–25 (GFLLIATFLLVLMVLARPLGS), 63–83 (LSAILGLNILGLAVLFFMLLG), 132–152 (GLTVQNFLSAASGIAVIFALI), 170–190 (LLRITLWVLTPVALLIALFFI), 253–273 (FVQMLAIFLIPTALCFAFGEV), 283–303 (LLWAMSVIFVICVGVVMWAEV), 329–349 (VLVSSLFAVVTTAASCGAVIA), 356–376 (ALGGMVPMWLMQIGEVVFGGV), 379–399 (GLYGMMLFVLLAVFIAGLMIG), 416–436 (LTALAILVTPTLVLMGAALAM), 484–504 (LLALCMFVGRFGVIIPVMAIA), and 526–546 (LFVGLLIGTVLLVGALTFIPA).

Belongs to the KdpA family. The system is composed of three essential subunits: KdpA, KdpB and KdpC.

The protein localises to the cell inner membrane. In terms of biological role, part of the high-affinity ATP-driven potassium transport (or Kdp) system, which catalyzes the hydrolysis of ATP coupled with the electrogenic transport of potassium into the cytoplasm. This subunit binds the periplasmic potassium ions and delivers the ions to the membrane domain of KdpB through an intramembrane tunnel. The sequence is that of Potassium-transporting ATPase potassium-binding subunit from Escherichia coli O6:K15:H31 (strain 536 / UPEC).